Reading from the N-terminus, the 271-residue chain is Formamidopyrimidine-DNA glycosylase (271 aa).

The active-site Schiff-base intermediate with DNA is the Pro2. Glu3 acts as the Proton donor in catalysis. Lys56 serves as the catalytic Proton donor; for beta-elimination activity. Residues His89, Arg107, and Lys151 each contribute to the DNA site. The segment at 236-270 (NVYGRAGLPCRQCGTPVRLLRQGQRSTYFCPHCQR) adopts an FPG-type zinc-finger fold. Arg260 functions as the Proton donor; for delta-elimination activity in the catalytic mechanism.

The protein belongs to the FPG family. Monomer. Zn(2+) serves as cofactor.

It catalyses the reaction Hydrolysis of DNA containing ring-opened 7-methylguanine residues, releasing 2,6-diamino-4-hydroxy-5-(N-methyl)formamidopyrimidine.. The enzyme catalyses 2'-deoxyribonucleotide-(2'-deoxyribose 5'-phosphate)-2'-deoxyribonucleotide-DNA = a 3'-end 2'-deoxyribonucleotide-(2,3-dehydro-2,3-deoxyribose 5'-phosphate)-DNA + a 5'-end 5'-phospho-2'-deoxyribonucleoside-DNA + H(+). In terms of biological role, involved in base excision repair of DNA damaged by oxidation or by mutagenic agents. Acts as a DNA glycosylase that recognizes and removes damaged bases. Has a preference for oxidized purines, such as 7,8-dihydro-8-oxoguanine (8-oxoG). Has AP (apurinic/apyrimidinic) lyase activity and introduces nicks in the DNA strand. Cleaves the DNA backbone by beta-delta elimination to generate a single-strand break at the site of the removed base with both 3'- and 5'-phosphates. In Acidovorax sp. (strain JS42), this protein is Formamidopyrimidine-DNA glycosylase.